The primary structure comprises 1267 residues: Clustered mitochondria protein homolog (1267 aa).

7 TPR repeats span residues 64–102, 420–453, 716–749, 795–830, 904–939, 1010–1043, and 1138–1171; these read YNLK…KPYN, YSFV…LNML, EAHE…MIKE, LVPL…IPAL, RSIC…KSRA, AEKY…YERV, and AYIK…FTKE. The 258-residue stretch at 329-586 folds into the Clu domain; sequence PTNGPDYLRT…NTYPLDVEFA (258 aa). Polar residues predominate over residues 1203–1219; the sequence is QQDQTAASGLKQQPQKS. A disordered region spans residues 1203 to 1267; sequence QQDQTAASGL…KSKSKGKNKK (65 aa). Residues 1224–1239 show a composition bias toward basic and acidic residues; sequence NKKETTNPDLADKSVD. Over residues 1254–1267 the composition is skewed to basic residues; the sequence is KTTKKSKSKGKNKK.

Belongs to the CLU family. May associate with the eukaryotic translation initiation factor 3 (eIF-3) complex.

It is found in the cytoplasm. Functionally, mRNA-binding protein involved in proper cytoplasmic distribution of mitochondria. The sequence is that of Clustered mitochondria protein homolog from Candida glabrata (strain ATCC 2001 / BCRC 20586 / JCM 3761 / NBRC 0622 / NRRL Y-65 / CBS 138) (Yeast).